Here is a 288-residue protein sequence, read N- to C-terminus: Fibroblast growth factor 2 (288 aa).

A propeptide spanning residues 1–142 (MVGVGGGDVE…TMAAGSITTL (142 aa)) is cleaved from the precursor. The interval 1-156 (MVGVGGGDVE…EDGGSGAFPP (156 aa)) is disordered. Positions 72 to 84 (ERPSGSRLGDHGR) are enriched in basic and acidic residues. An omega-N-methylarginine; alternate mark is found at Arg-108, Arg-110, and Arg-112. Symmetric dimethylarginine; alternate occurs at positions 108, 110, and 112. A compositionally biased stretch (low complexity) spans 113–132 (GTAAPRAAPAARGSRPGPAG). Asn-169 is a binding site for heparin. The Cell attachment site; atypical motif lies at 179-181 (DGR). At Tyr-215 the chain carries Phosphotyrosine; by TEC. The Cell attachment site; atypical signature appears at 221 to 223 (DGR). Lys-228 is covalently cross-linked (Glycyl lysine isopeptide (Lys-Gly) (interchain with G-Cter in SUMO1)). A heparin-binding region spans residues 261 to 277 (KRTGQYKLGSKTGPGQK).

This sequence belongs to the heparin-binding growth factors family. In terms of assembly, monomer. Homodimer. Interacts with FGFR1, FGFR2, FGFR3 and FGFR4. Affinity between fibroblast growth factors (FGFs) and their receptors is increased by heparan sulfate glycosaminoglycans that function as coreceptors. Interacts with CSPG4, FGFBP1 and TEC. Found in a complex with FGFBP1, FGF1 and FGF2. Interacts with FGFBP3. Interacts with integrin ITGAV:ITGB3; the interaction is required for FGF2 signaling. Interacts with SNORC (via the extracellular domain). Interacts with glypican GPC3. Phosphorylation at Tyr-215 regulates FGF2 unconventional secretion.

Its subcellular location is the secreted. It is found in the nucleus. Functionally, acts as a ligand for FGFR1, FGFR2, FGFR3 and FGFR4. Also acts as an integrin ligand which is required for FGF2 signaling. Binds to integrin ITGAV:ITGB3. Plays an important role in the regulation of cell survival, cell division, cell differentiation and cell migration. Functions as a potent mitogen in vitro. Can induce angiogenesis. Mediates phosphorylation of ERK1/2 and thereby promotes retinal lens fiber differentiation. The sequence is that of Fibroblast growth factor 2 from Pan troglodytes (Chimpanzee).